Reading from the N-terminus, the 240-residue chain is Pyridoxine 5'-phosphate synthase (240 aa).

Asparagine 7 is a binding site for 3-amino-2-oxopropyl phosphate. 9 to 10 (DH) contacts 1-deoxy-D-xylulose 5-phosphate. Position 18 (arginine 18) interacts with 3-amino-2-oxopropyl phosphate. The active-site Proton acceptor is the histidine 43. 1-deoxy-D-xylulose 5-phosphate-binding residues include arginine 45 and histidine 50. The active-site Proton acceptor is glutamate 70. Residue threonine 100 participates in 1-deoxy-D-xylulose 5-phosphate binding. Residue histidine 191 is the Proton donor of the active site. 3-amino-2-oxopropyl phosphate contacts are provided by residues glycine 192 and 213–214 (GH).

This sequence belongs to the PNP synthase family. As to quaternary structure, homooctamer; tetramer of dimers.

Its subcellular location is the cytoplasm. It catalyses the reaction 3-amino-2-oxopropyl phosphate + 1-deoxy-D-xylulose 5-phosphate = pyridoxine 5'-phosphate + phosphate + 2 H2O + H(+). Its pathway is cofactor biosynthesis; pyridoxine 5'-phosphate biosynthesis; pyridoxine 5'-phosphate from D-erythrose 4-phosphate: step 5/5. Its function is as follows. Catalyzes the complicated ring closure reaction between the two acyclic compounds 1-deoxy-D-xylulose-5-phosphate (DXP) and 3-amino-2-oxopropyl phosphate (1-amino-acetone-3-phosphate or AAP) to form pyridoxine 5'-phosphate (PNP) and inorganic phosphate. In Crocosphaera subtropica (strain ATCC 51142 / BH68) (Cyanothece sp. (strain ATCC 51142)), this protein is Pyridoxine 5'-phosphate synthase.